The primary structure comprises 304 residues: CRISPR-associated endonuclease Cas1 (304 aa).

Mn(2+) is bound by residues E148, H204, and E219.

The protein belongs to the CRISPR-associated endonuclease Cas1 family. As to quaternary structure, homodimer, forms a heterotetramer with a Cas2 homodimer. Mg(2+) serves as cofactor. Requires Mn(2+) as cofactor.

Functionally, CRISPR (clustered regularly interspaced short palindromic repeat), is an adaptive immune system that provides protection against mobile genetic elements (viruses, transposable elements and conjugative plasmids). CRISPR clusters contain spacers, sequences complementary to antecedent mobile elements, and target invading nucleic acids. CRISPR clusters are transcribed and processed into CRISPR RNA (crRNA). Acts as a dsDNA endonuclease. Involved in the integration of spacer DNA into the CRISPR cassette. The chain is CRISPR-associated endonuclease Cas1 from Neisseria meningitidis serogroup C (strain 8013).